The chain runs to 620 residues: MSPEALSELISSIAHNLVAAGQAGTLTDDLIPPVDKLAVMRPKDRAHGDWASNIAMQLAKKAGMKPRDLAEPFAAALAEADGIAKVEVAGPGFINITLDSASAAAVVDTVLAAGAVTDTDKHLNKVNEYGRNAHLGGQTLNLEFVSANPTGPIHIGGTRWAAVGDAMARVLEANGAKVVREYYFNDHGEQINRFAKSLVAAWAEANNLGDAGYQTETPCDGYKGAYINEIAARVQAEAESDGVDLTALAHQDQGLNDDGEPLGEADTEVREEFRKRAVPMMFDEIQKSMKDFRVNFDVWFHENSLYADGKVDAAIEELKSRGDIFDKDGATWFESTKHGDDKDRVIIKSNGEFAYFAADIAYYWDKRHRAENPADVAIYMLGADHHGYIGRMMAMCAAFGDEPGKNMQILIGQLVNVMKDGKPVRMSKRAGNVVTIDDLVSVVGVDAARYSLARSDYNQNFDIDLALLASHTNDNPVYYVQYAHARSKNVDRNAAVAGISYEGADLALLDTEADGEVLAALAQFPSVLATAADDRQPHKVARYLEELAATYHKWYNVERVVPMVLTDPETRGDDEARKALEIAKNPEPARAAARLKLNDAVQQVIANGLDLLGVTAPEKM.

Residues 147–157 (ANPTGPIHIGG) carry the 'HIGH' region motif.

This sequence belongs to the class-I aminoacyl-tRNA synthetase family. Monomer.

The protein resides in the cytoplasm. It catalyses the reaction tRNA(Arg) + L-arginine + ATP = L-arginyl-tRNA(Arg) + AMP + diphosphate. This Bifidobacterium longum subsp. infantis (strain ATCC 15697 / DSM 20088 / JCM 1222 / NCTC 11817 / S12) protein is Arginine--tRNA ligase.